Consider the following 489-residue polypeptide: GTPase Der (489 aa).

EngA-type G domains lie at Pro30 to Pro199 and Phe227 to His403. Residues Gly36–Ser43, Asp85–Leu89, Asn151–Asp154, Gly233–Ser240, Asp280–Ile284, and Asn345–Asp348 each bind GTP. Positions Arg404 to Arg488 constitute a KH-like domain.

The protein belongs to the TRAFAC class TrmE-Era-EngA-EngB-Septin-like GTPase superfamily. EngA (Der) GTPase family. Associates with the 50S ribosomal subunit.

Its function is as follows. GTPase that plays an essential role in the late steps of ribosome biogenesis. The chain is GTPase Der from Leptospira interrogans serogroup Icterohaemorrhagiae serovar Lai (strain 56601).